We begin with the raw amino-acid sequence, 1429 residues long: Autophagy-related protein 11 (1429 aa).

Positions 71 to 99 (TQRSQPGASSPPLSELPLPRYNAHTPPNS) are disordered. The span at 80–89 (SPPLSELPLP) shows a compositional bias: low complexity. 4 coiled-coil regions span residues 143-173 (VMLRCLDAAVANLENAVKGLENKYVELKEWS), 553-590 (DDLLRSLQADKTRLESKLKTAESRVRRLEDLLHRQTQA), 632-815 (LETL…LEDI), and 851-989 (EGDM…RLES). A disordered region spans residues 1024–1061 (DGTMHIQRTPRSERSLATTANPNDSDPSSSLRRSSTLN). Over residues 1042–1061 (TANPNDSDPSSSLRRSSTLN) the composition is skewed to low complexity. Residues 1105–1143 (ADAVYRRVKDVEHMARKLQREARAYREKAHSFQKEAHDK) adopt a coiled-coil conformation. The span at 1209 to 1229 (SKSLQHDQAGETRKDGARGET) shows a compositional bias: basic and acidic residues. Disordered regions lie at residues 1209-1241 (SKSLQHDQAGETRKDGARGETESLDDDENDNPF) and 1336-1429 (SSRG…LIGP). Residues 1230–1239 (ESLDDDENDN) show a composition bias toward acidic residues. 2 stretches are compositionally biased toward polar residues: residues 1345-1372 (ASETNSLRAVPADNNSSAPTNAAQQHMS) and 1383-1393 (QETPQQTNSIS).

It belongs to the ATG11 family. In terms of assembly, homodimer.

It localises to the preautophagosomal structure membrane. The protein localises to the vacuole membrane. In terms of biological role, involved in cytoplasm to vacuole transport (Cvt), pexophagy, mitophagy and nucleophagy. Recruits mitochondria for their selective degradation via autophagy (mitophagy) during starvation. Works as scaffold proteins that recruit ATG proteins to the pre-autophagosome (PAS), the site of vesicle/autophagosome formation. Required for the Cvt vesicles completion. This chain is Autophagy-related protein 11 (apg-8), found in Neurospora crassa (strain ATCC 24698 / 74-OR23-1A / CBS 708.71 / DSM 1257 / FGSC 987).